Here is a 146-residue protein sequence, read N- to C-terminus: Large ribosomal subunit protein uL15 (146 aa).

The disordered stretch occupies residues 1-51 (MKLHELQPAPGSRKERNRVGRGIGSGNGKTSGKGHKGQNARSGGGVRIGFE). Composition is skewed to gly residues over residues 21–31 (RGIGSGNGKTS) and 42–51 (SGGGVRIGFE).

Belongs to the universal ribosomal protein uL15 family. In terms of assembly, part of the 50S ribosomal subunit.

Functionally, binds to the 23S rRNA. This is Large ribosomal subunit protein uL15 from Anoxybacillus flavithermus (strain DSM 21510 / WK1).